The primary structure comprises 450 residues: Cysteine protease ATG4C (450 aa).

The Nucleophile role is filled by Cys112. Active-site residues include Asp336 and His338.

This sequence belongs to the peptidase C54 family.

It localises to the cytoplasm. The enzyme catalyses [protein]-C-terminal L-amino acid-glycyl-phosphatidylethanolamide + H2O = [protein]-C-terminal L-amino acid-glycine + a 1,2-diacyl-sn-glycero-3-phosphoethanolamine. Cysteine protease that plays a key role in autophagy by mediating both proteolytic activation and delipidation of ATG8 family proteins. The protease activity is required for proteolytic activation of ATG8 family proteins: cleaves the C-terminal amino acid of ATG8 proteins to reveal a C-terminal glycine. Exposure of the glycine at the C-terminus is essential for ATG8 proteins conjugation to phosphatidylethanolamine (PE) and insertion to membranes, which is necessary for autophagy. In addition to the protease activity, also mediates delipidation of ATG8 family proteins. Catalyzes delipidation of PE-conjugated forms of ATG8 proteins during macroautophagy. The protein is Cysteine protease ATG4C of Xenopus tropicalis (Western clawed frog).